Reading from the N-terminus, the 58-residue chain is Photosystem II reaction center protein K (58 aa).

The propeptide occupies Met-1–Ala-21. Residues Ile-29–Phe-49 traverse the membrane as a helical segment.

The protein belongs to the PsbK family. PSII is composed of 1 copy each of membrane proteins PsbA, PsbB, PsbC, PsbD, PsbE, PsbF, PsbH, PsbI, PsbJ, PsbK, PsbL, PsbM, PsbT, PsbX, PsbY, PsbZ, Psb30/Ycf12, at least 3 peripheral proteins of the oxygen-evolving complex and a large number of cofactors. It forms dimeric complexes.

Its subcellular location is the plastid. It is found in the chloroplast thylakoid membrane. Its function is as follows. One of the components of the core complex of photosystem II (PSII). PSII is a light-driven water:plastoquinone oxidoreductase that uses light energy to abstract electrons from H(2)O, generating O(2) and a proton gradient subsequently used for ATP formation. It consists of a core antenna complex that captures photons, and an electron transfer chain that converts photonic excitation into a charge separation. The protein is Photosystem II reaction center protein K of Physcomitrium patens (Spreading-leaved earth moss).